The chain runs to 507 residues: Glucose-6-phosphate 1-dehydrogenase (507 aa).

NADP(+) contacts are provided by arginine 57 and lysine 168. Positions 198, 202, 236, and 255 each coordinate substrate. Histidine 260 functions as the Proton acceptor in the catalytic mechanism. Lysine 356 serves as a coordination point for substrate.

This sequence belongs to the glucose-6-phosphate dehydrogenase family.

It carries out the reaction D-glucose 6-phosphate + NADP(+) = 6-phospho-D-glucono-1,5-lactone + NADPH + H(+). Its pathway is carbohydrate degradation; pentose phosphate pathway; D-ribulose 5-phosphate from D-glucose 6-phosphate (oxidative stage): step 1/3. In terms of biological role, catalyzes the oxidation of glucose 6-phosphate to 6-phosphogluconolactone. The protein is Glucose-6-phosphate 1-dehydrogenase of Chlamydia muridarum (strain MoPn / Nigg).